The sequence spans 456 residues: Bifunctional protein GlmU (456 aa).

The tract at residues 1 to 229 (MLNSAMSVVI…ISETDGVNNR (229 aa)) is pyrophosphorylase. UDP-N-acetyl-alpha-D-glucosamine-binding positions include 11–14 (LAAG), Lys-25, Gln-76, 81–82 (GT), 103–105 (YGD), Gly-140, Glu-154, Asn-169, and Asn-227. Asp-105 provides a ligand contact to Mg(2+). A Mg(2+)-binding site is contributed by Asn-227. The segment at 230–250 (LQLSRLERIYQAEQAEKLLLS) is linker. Residues 251 to 456 (GVMLRDPARF…QGWQRPVKKK (206 aa)) form an N-acetyltransferase region. UDP-N-acetyl-alpha-D-glucosamine contacts are provided by Arg-333 and Lys-351. His-363 serves as the catalytic Proton acceptor. Residues Tyr-366 and Asn-377 each contribute to the UDP-N-acetyl-alpha-D-glucosamine site. Residues Ala-380, 386 to 387 (NY), Ser-405, Ala-423, and Arg-440 contribute to the acetyl-CoA site.

This sequence in the N-terminal section; belongs to the N-acetylglucosamine-1-phosphate uridyltransferase family. In the C-terminal section; belongs to the transferase hexapeptide repeat family. In terms of assembly, homotrimer. Mg(2+) is required as a cofactor.

Its subcellular location is the cytoplasm. The enzyme catalyses alpha-D-glucosamine 1-phosphate + acetyl-CoA = N-acetyl-alpha-D-glucosamine 1-phosphate + CoA + H(+). It carries out the reaction N-acetyl-alpha-D-glucosamine 1-phosphate + UTP + H(+) = UDP-N-acetyl-alpha-D-glucosamine + diphosphate. It participates in nucleotide-sugar biosynthesis; UDP-N-acetyl-alpha-D-glucosamine biosynthesis; N-acetyl-alpha-D-glucosamine 1-phosphate from alpha-D-glucosamine 6-phosphate (route II): step 2/2. It functions in the pathway nucleotide-sugar biosynthesis; UDP-N-acetyl-alpha-D-glucosamine biosynthesis; UDP-N-acetyl-alpha-D-glucosamine from N-acetyl-alpha-D-glucosamine 1-phosphate: step 1/1. Its pathway is bacterial outer membrane biogenesis; LPS lipid A biosynthesis. Catalyzes the last two sequential reactions in the de novo biosynthetic pathway for UDP-N-acetylglucosamine (UDP-GlcNAc). The C-terminal domain catalyzes the transfer of acetyl group from acetyl coenzyme A to glucosamine-1-phosphate (GlcN-1-P) to produce N-acetylglucosamine-1-phosphate (GlcNAc-1-P), which is converted into UDP-GlcNAc by the transfer of uridine 5-monophosphate (from uridine 5-triphosphate), a reaction catalyzed by the N-terminal domain. In Salmonella gallinarum (strain 287/91 / NCTC 13346), this protein is Bifunctional protein GlmU.